Here is a 913-residue protein sequence, read N- to C-terminus: DNA mismatch repair protein MutS (913 aa).

Position 720–727 (720–727 (GPNASGKS)) interacts with ATP.

It belongs to the DNA mismatch repair MutS family.

This protein is involved in the repair of mismatches in DNA. It is possible that it carries out the mismatch recognition step. This protein has a weak ATPase activity. This Prochlorococcus marinus (strain MIT 9312) protein is DNA mismatch repair protein MutS.